Here is a 232-residue protein sequence, read N- to C-terminus: MTTRPELVLLDIEGTIAPISFVHDVLFPYARARLAGFVAAHGDEPEIAAALAELDAIAPGAPPVETLLALMDRDAKVGPLKLIQGRIWAEGFAEGALTSRLYPDVAPVLRAWHGSGLRLAIYSSGSEEAQRLLLGHTPDGGLTALFERFFDTRMGGKRDAASYAAIARSMAVAPAHVLFLSDVADELAAAATAGIQVCQIVRPEDGTIASADYPTAPDLAAVAAAFDRPDPA.

The protein belongs to the HAD-like hydrolase superfamily. MasA/MtnC family. Monomer. The cofactor is Mg(2+).

The catalysed reaction is 5-methylsulfanyl-2,3-dioxopentyl phosphate + H2O = 1,2-dihydroxy-5-(methylsulfanyl)pent-1-en-3-one + phosphate. It functions in the pathway amino-acid biosynthesis; L-methionine biosynthesis via salvage pathway; L-methionine from S-methyl-5-thio-alpha-D-ribose 1-phosphate: step 3/6. It participates in amino-acid biosynthesis; L-methionine biosynthesis via salvage pathway; L-methionine from S-methyl-5-thio-alpha-D-ribose 1-phosphate: step 4/6. In terms of biological role, bifunctional enzyme that catalyzes the enolization of 2,3-diketo-5-methylthiopentyl-1-phosphate (DK-MTP-1-P) into the intermediate 2-hydroxy-3-keto-5-methylthiopentenyl-1-phosphate (HK-MTPenyl-1-P), which is then dephosphorylated to form the acireductone 1,2-dihydroxy-3-keto-5-methylthiopentene (DHK-MTPene). The protein is Enolase-phosphatase E1 of Acidiphilium cryptum (strain JF-5).